Consider the following 154-residue polypeptide: Myoglobin (154 aa).

The 147-residue stretch at 2–148 folds into the Globin domain; the sequence is GLSDGEWQIV…FRNDIAAKYK (147 aa). The residue at position 4 (Ser4) is a Phosphoserine. Position 65 (His65) interacts with nitrite. Position 65 (His65) interacts with O2. At Thr68 the chain carries Phosphothreonine. His94 is a heme b binding site.

Belongs to the globin family. In terms of assembly, monomeric.

Its subcellular location is the cytoplasm. It is found in the sarcoplasm. The catalysed reaction is Fe(III)-heme b-[protein] + nitric oxide + H2O = Fe(II)-heme b-[protein] + nitrite + 2 H(+). It catalyses the reaction H2O2 + AH2 = A + 2 H2O. Its function is as follows. Monomeric heme protein which primary function is to store oxygen and facilitate its diffusion within muscle tissues. Reversibly binds oxygen through a pentacoordinated heme iron and enables its timely and efficient release as needed during periods of heightened demand. Depending on the oxidative conditions of tissues and cells, and in addition to its ability to bind oxygen, it also has a nitrite reductase activity whereby it regulates the production of bioactive nitric oxide. Under stress conditions, like hypoxia and anoxia, it also protects cells against reactive oxygen species thanks to its pseudoperoxidase activity. The sequence is that of Myoglobin (MB) from Lycaon pictus (African wild dog).